Consider the following 968-residue polypeptide: RNA polymerase-associated protein RapA (968 aa).

The 171-residue stretch at 164-334 (DVGRRHAPRV…FARLRLLDPN (171 aa)) folds into the Helicase ATP-binding domain. Residue 177 to 184 (DEVGLGKT) participates in ATP binding. The DEAH box motif lies at 280–283 (DEAH). The 155-residue stretch at 490–644 (RVEWLMGYLT…TCPTGRTIYD (155 aa)) folds into the Helicase C-terminal domain.

Belongs to the SNF2/RAD54 helicase family. RapA subfamily. In terms of assembly, interacts with the RNAP. Has a higher affinity for the core RNAP than for the holoenzyme. Its ATPase activity is stimulated by binding to RNAP.

Transcription regulator that activates transcription by stimulating RNA polymerase (RNAP) recycling in case of stress conditions such as supercoiled DNA or high salt concentrations. Probably acts by releasing the RNAP, when it is trapped or immobilized on tightly supercoiled DNA. Does not activate transcription on linear DNA. Probably not involved in DNA repair. This is RNA polymerase-associated protein RapA from Enterobacter sp. (strain 638).